The following is a 133-amino-acid chain: Profilin-2 (133 aa).

Residues cysteine 13 and cysteine 117 are joined by a disulfide bond. The Involved in PIP2 interaction motif lies at 83–99; the sequence is AVIRGKKGSGGITIKKT. Position 113 is a phosphothreonine (threonine 113).

This sequence belongs to the profilin family. In terms of assembly, occurs in many kinds of cells as a complex with monomeric actin in a 1:1 ratio. Phosphorylated by MAP kinases.

It localises to the cytoplasm. The protein resides in the cytoskeleton. Binds to actin and affects the structure of the cytoskeleton. At high concentrations, profilin prevents the polymerization of actin, whereas it enhances it at low concentrations. This is Profilin-2 from Corylus avellana (European hazel).